A 232-amino-acid polypeptide reads, in one-letter code: Large ribosomal subunit protein uL1 (232 aa).

The protein belongs to the universal ribosomal protein uL1 family. Part of the 50S ribosomal subunit.

In terms of biological role, binds directly to 23S rRNA. The L1 stalk is quite mobile in the ribosome, and is involved in E site tRNA release. Protein L1 is also a translational repressor protein, it controls the translation of the L11 operon by binding to its mRNA. The polypeptide is Large ribosomal subunit protein uL1 (Liberibacter asiaticus (Citrus greening disease)).